The following is a 210-amino-acid chain: Ribonuclease HII (210 aa).

One can recognise an RNase H type-2 domain in the interval 18–207 (RFVAGVDEVG…VHKILCKEET (190 aa)). Positions 24, 25, and 115 each coordinate a divalent metal cation.

The protein belongs to the RNase HII family. It depends on Mn(2+) as a cofactor. The cofactor is Mg(2+).

It is found in the cytoplasm. The enzyme catalyses Endonucleolytic cleavage to 5'-phosphomonoester.. Functionally, endonuclease that specifically degrades the RNA of RNA-DNA hybrids. The chain is Ribonuclease HII from Paracoccus denitrificans (strain Pd 1222).